A 649-amino-acid polypeptide reads, in one-letter code: Glycerol-3-phosphate dehydrogenase, mitochondrial (649 aa).

An FAD-binding site is contributed by 69-97; sequence DVLIIGGGATGTGVAVDASTRGLNVCLLE.

It belongs to the FAD-dependent glycerol-3-phosphate dehydrogenase family. FAD is required as a cofactor.

It localises to the mitochondrion. The enzyme catalyses a quinone + sn-glycerol 3-phosphate = dihydroxyacetone phosphate + a quinol. It functions in the pathway polyol metabolism; glycerol degradation via glycerol kinase pathway; glycerone phosphate from sn-glycerol 3-phosphate (anaerobic route): step 1/1. This Schizosaccharomyces pombe (strain 972 / ATCC 24843) (Fission yeast) protein is Glycerol-3-phosphate dehydrogenase, mitochondrial (gut2).